Here is a 133-residue protein sequence, read N- to C-terminus: MTDQLTQTPLYGERAIAEAELICFDNPRPGRPYEVSIELPEFTCKCPFSSYPDFAVLRLIYQPGPRVVELKAIKLYVNSYRDQSISHEEVTNRILDDLVAATDPVWMQLEADFNPRGNVHTVVRVSHGTRQPC.

Cys46 (thioimide intermediate) is an active-site residue. Asp53 functions as the Proton donor in the catalytic mechanism. Residues Val68 to Leu70 and His87 to Glu88 each bind substrate.

Belongs to the GTP cyclohydrolase I family. QueF type 1 subfamily.

The protein localises to the cytoplasm. It carries out the reaction 7-aminomethyl-7-carbaguanine + 2 NADP(+) = 7-cyano-7-deazaguanine + 2 NADPH + 3 H(+). The protein operates within tRNA modification; tRNA-queuosine biosynthesis. In terms of biological role, catalyzes the NADPH-dependent reduction of 7-cyano-7-deazaguanine (preQ0) to 7-aminomethyl-7-deazaguanine (preQ1). The chain is NADPH-dependent 7-cyano-7-deazaguanine reductase from Parasynechococcus marenigrum (strain WH8102).